Here is a 177-residue protein sequence, read N- to C-terminus: NADH-quinone oxidoreductase subunit B (177 aa).

Residues Cys53, Cys54, Cys118, and Cys148 each contribute to the [4Fe-4S] cluster site.

The protein belongs to the complex I 20 kDa subunit family. As to quaternary structure, NDH-1 is composed of 14 different subunits. Subunits NuoB, C, D, E, F, and G constitute the peripheral sector of the complex. Requires [4Fe-4S] cluster as cofactor.

It is found in the cell membrane. The catalysed reaction is a quinone + NADH + 5 H(+)(in) = a quinol + NAD(+) + 4 H(+)(out). In terms of biological role, NDH-1 shuttles electrons from NADH, via FMN and iron-sulfur (Fe-S) centers, to quinones in the respiratory chain. The immediate electron acceptor for the enzyme in this species is believed to be a menaquinone. Couples the redox reaction to proton translocation (for every two electrons transferred, four hydrogen ions are translocated across the cytoplasmic membrane), and thus conserves the redox energy in a proton gradient. This is NADH-quinone oxidoreductase subunit B from Anoxybacillus flavithermus (strain DSM 21510 / WK1).